The following is a 147-amino-acid chain: MGTPASVVSEPPPWQAPIEARGRKQASANIFQDAELLQIQALFQRSGDQLAEERAQIIWECAGDHRVAEALKRLRRKRPPRQKPLGHSLHHCSRLRILEPHSALANPQSATETASSEQYLHSRKKSARIRRNWRKSGPTSYLHQIRH.

Disordered stretches follow at residues 1–24 (MGTP…RGRK) and 104–147 (LANP…QIRH). Residues 105–119 (ANPQSATETASSEQY) show a composition bias toward polar residues. A compositionally biased stretch (basic residues) spans 121 to 134 (HSRKKSARIRRNWR). Positions 137–147 (GPTSYLHQIRH) are enriched in polar residues.

Its function is as follows. May be involved in MAP kinase activation, epithelial sodium channel (ENaC) down-regulation and cell cycling. In Homo sapiens (Human), this protein is Arginine vasopressin-induced protein 1 (AVPI1).